Consider the following 201-residue polypeptide: UPF0323 lipoprotein Cj0371 (201 aa).

Residues 1–26 (MKKIKKIIQIGMIGGLAAVAGGALAG) form the signal peptide. Cys27 is lipidated: N-palmitoyl cysteine. A lipid anchor (S-diacylglycerol cysteine) is attached at Cys27. Residues 169-201 (NKAGTTSSASSAKKSGFFGGGSKATSSSSSFGS) are disordered. Composition is skewed to low complexity over residues 170–184 (KAGT…KKSG) and 191–201 (KATSSSSSFGS).

The protein belongs to the UPF0323 family.

It localises to the cell membrane. This is UPF0323 lipoprotein Cj0371 from Campylobacter jejuni subsp. jejuni serotype O:2 (strain ATCC 700819 / NCTC 11168).